Reading from the N-terminus, the 612-residue chain is Cyclin-dependent kinase G1 (612 aa).

Residues 26-54 (SRDVYVRQSGRDDERRQIKRPSDHDLRRN) are compositionally biased toward basic and acidic residues. Disordered stretches follow at residues 26-60 (SRDV…RHRS) and 239-278 (CYSS…EDQD). Residues 297-593 (FQKLNKINEG…VEDALNHGWF (297 aa)) enclose the Protein kinase domain. ATP contacts are provided by residues 303-311 (INEGTYGIV) and Lys326. Tyr308 is modified (phosphotyrosine). Residue Asp426 is the Proton acceptor of the active site. Position 453 is a phosphoserine (Ser453). Position 459 is a phosphothreonine (Thr459).

The protein belongs to the protein kinase superfamily. Ser/Thr protein kinase family. Forms a complex with CYCL1-1. Associated with the spliceosome. Interacts with RS2Z33. In terms of tissue distribution, expressed in leaves and inflorescences. Lower levels of expression in roots and stems.

Its subcellular location is the nucleus speckle. The enzyme catalyses L-seryl-[protein] + ATP = O-phospho-L-seryl-[protein] + ADP + H(+). It carries out the reaction L-threonyl-[protein] + ATP = O-phospho-L-threonyl-[protein] + ADP + H(+). Its function is as follows. Cyclin-dependent kinase involved in pre-mRNA splicing. Required for the correct splicing of the sixth intron of CALS5 pre-mRNA. May stabilize the binding of U1 snRNP to this rare type of intron with a GC 5'SS. Involved in chromosome pairing and is required for the completion of synapsis in male meiocytes at high ambient temperatures. The polypeptide is Cyclin-dependent kinase G1 (CDKG1) (Arabidopsis thaliana (Mouse-ear cress)).